Reading from the N-terminus, the 380-residue chain is uncharacterized protein (380 aa).

The Peptidase M14 domain occupies 111-369 (APYSMERHHD…DCLAILAEMI (259 aa)). Zn(2+)-binding residues include His164, Glu167, and His257. Glu333 functions as the Proton donor/acceptor in the catalytic mechanism.

Requires Zn(2+) as cofactor.

This is an uncharacterized protein from Zymomonas mobilis subsp. mobilis (strain ATCC 31821 / ZM4 / CP4).